A 174-amino-acid chain; its full sequence is Glutamyl-tRNA(Gln) amidotransferase subunit F, mitochondrial (174 aa).

Belongs to the GatF family. As to quaternary structure, subunit of the heterotrimeric GatFAB amidotransferase (AdT) complex, composed of A, B and F subunits.

It is found in the mitochondrion inner membrane. It carries out the reaction L-glutamyl-tRNA(Gln) + L-glutamine + ATP + H2O = L-glutaminyl-tRNA(Gln) + L-glutamate + ADP + phosphate + H(+). In terms of biological role, allows the formation of correctly charged Gln-tRNA(Gln) through the transamidation of misacylated Glu-tRNA(Gln) in the mitochondria. The reaction takes place in the presence of glutamine and ATP through an activated gamma-phospho-Glu-tRNA(Gln). Required for proper protein synthesis within the mitochondrion. This is Glutamyl-tRNA(Gln) amidotransferase subunit F, mitochondrial from Kluyveromyces lactis (strain ATCC 8585 / CBS 2359 / DSM 70799 / NBRC 1267 / NRRL Y-1140 / WM37) (Yeast).